We begin with the raw amino-acid sequence, 258 residues long: UPF0246 protein YaaA (258 aa).

This sequence belongs to the UPF0246 family.

This chain is UPF0246 protein YaaA, found in Escherichia coli (strain SE11).